Reading from the N-terminus, the 1272-residue chain is uncharacterized protein (1272 aa).

Coiled coils occupy residues 185–212 (IEFL…EAVN), 246–274 (KNSA…YLDA), and 607–640 (ALGK…NTVI). Residues 1179-1231 (ELPETSQQPVVPTPPATRPSSPIPPESDILTEEEQLEEQPPRQQQATRKTTTT) are disordered. The span at 1189–1203 (VPTPPATRPSSPIPP) shows a compositional bias: pro residues. Over residues 1219–1231 (PRQQQATRKTTTT) the composition is skewed to low complexity.

This is an uncharacterized protein from Magallana gigas (Pacific oyster).